An 845-amino-acid polypeptide reads, in one-letter code: Protein translocase subunit SecA 1 (845 aa).

ATP-binding positions include Gln-91, 109–113, and Asp-498; that span reads GEGKT. Residues 795-845 form a disordered region; sequence TDFGTAQHVSAEDGKEKAKKQPIVKGDKVGRNDPCPCGSGKKYKNCHGKEE. Residues Cys-829, Cys-831, Cys-840, and His-841 each coordinate Zn(2+). Residues 835-845 show a composition bias toward basic residues; that stretch reads KKYKNCHGKEE.

Belongs to the SecA family. Monomer and homodimer. Part of the essential Sec protein translocation apparatus which comprises SecA, SecYEG and auxiliary proteins SecDF. Other proteins may also be involved. Requires Zn(2+) as cofactor.

It is found in the cell membrane. Its subcellular location is the cytoplasm. The enzyme catalyses ATP + H2O + cellular proteinSide 1 = ADP + phosphate + cellular proteinSide 2.. In terms of biological role, part of the Sec protein translocase complex. Interacts with the SecYEG preprotein conducting channel. Has a central role in coupling the hydrolysis of ATP to the transfer of proteins into and across the cell membrane, serving as an ATP-driven molecular motor driving the stepwise translocation of polypeptide chains across the membrane. The polypeptide is Protein translocase subunit SecA 1 (Staphylococcus haemolyticus (strain JCSC1435)).